Here is a 494-residue protein sequence, read N- to C-terminus: Anthranilate synthase component 1 (494 aa).

Residues serine 50 and 276–278 each bind L-tryptophan; that span reads PYM. 311 to 312 is a binding site for chorismate; the sequence is GT. Glutamate 338 is a Mg(2+) binding site. Chorismate-binding positions include tyrosine 426, arginine 446, 460–462, and glycine 462; that span reads GAG. Residue glutamate 475 coordinates Mg(2+).

The protein belongs to the anthranilate synthase component I family. Heterotetramer consisting of two non-identical subunits: a beta subunit (TrpG) and a large alpha subunit (TrpE). It depends on Mg(2+) as a cofactor.

The enzyme catalyses chorismate + L-glutamine = anthranilate + pyruvate + L-glutamate + H(+). The protein operates within amino-acid biosynthesis; L-tryptophan biosynthesis; L-tryptophan from chorismate: step 1/5. Its activity is regulated as follows. Feedback inhibited by tryptophan. In terms of biological role, part of a heterotetrameric complex that catalyzes the two-step biosynthesis of anthranilate, an intermediate in the biosynthesis of L-tryptophan. In the first step, the glutamine-binding beta subunit (TrpG) of anthranilate synthase (AS) provides the glutamine amidotransferase activity which generates ammonia as a substrate that, along with chorismate, is used in the second step, catalyzed by the large alpha subunit of AS (TrpE) to produce anthranilate. In the absence of TrpG, TrpE can synthesize anthranilate directly from chorismate and high concentrations of ammonia. This Acetivibrio thermocellus (Hungateiclostridium thermocellum) protein is Anthranilate synthase component 1 (trpE).